The chain runs to 78 residues: Acyl carrier protein (78 aa).

One can recognise a Carrier domain in the interval 2–77; it reads SSIEERVKKI…LAINYINENL (76 aa). The residue at position 37 (serine 37) is an O-(pantetheine 4'-phosphoryl)serine.

This sequence belongs to the acyl carrier protein (ACP) family. 4'-phosphopantetheine is transferred from CoA to a specific serine of apo-ACP by AcpS. This modification is essential for activity because fatty acids are bound in thioester linkage to the sulfhydryl of the prosthetic group.

It localises to the cytoplasm. Its pathway is lipid metabolism; fatty acid biosynthesis. Carrier of the growing fatty acid chain in fatty acid biosynthesis. The sequence is that of Acyl carrier protein from Saccharophagus degradans (strain 2-40 / ATCC 43961 / DSM 17024).